Consider the following 175-residue polypeptide: Putative lipoprotein LppN (175 aa).

A signal peptide spans 1–20 (MRLPGRHVLYALSAVTMLAA). Cys-21 carries the N-palmitoyl cysteine lipid modification. Cys-21 is lipidated: S-diacylglycerol cysteine. The disordered stretch occupies residues 31-56 (ASTNMNPTNPPATAETATVSPTPAPQ). Low complexity predominate over residues 33 to 48 (TNMNPTNPPATAETAT).

Its subcellular location is the cell membrane. This is Putative lipoprotein LppN (lppN) from Mycobacterium bovis (strain ATCC BAA-935 / AF2122/97).